The chain runs to 197 residues: Elongation factor Ts (197 aa).

The tract at residues 81–84 is involved in Mg(2+) ion dislocation from EF-Tu; sequence TDFV.

It belongs to the EF-Ts family.

The protein localises to the cytoplasm. Its function is as follows. Associates with the EF-Tu.GDP complex and induces the exchange of GDP to GTP. It remains bound to the aminoacyl-tRNA.EF-Tu.GTP complex up to the GTP hydrolysis stage on the ribosome. In Sulfurihydrogenibium sp. (strain YO3AOP1), this protein is Elongation factor Ts.